Reading from the N-terminus, the 771-residue chain is PH and SEC7 domain-containing protein 2 (771 aa).

2 disordered regions span residues M1 to A67 and G107 to G136. The segment covering G47–V66 has biased composition (basic and acidic residues). The residue at position 191 (S191) is a Phosphoserine. Disordered regions lie at residues G207–R230 and P244–C307. The span at L218–R230 shows a compositional bias: low complexity. The span at G257–T266 shows a compositional bias: acidic residues. The region spanning D260 to E462 is the SEC7 domain. Over residues E288–S299 the composition is skewed to low complexity. The PH domain occupies T512–A625. Residues L622 to M639 traverse the membrane as a helical segment. Residues T651–H680 adopt a coiled-coil conformation. The segment at D739 to T771 is disordered. Over residues S748 to K761 the composition is skewed to polar residues.

Belongs to the PSD family.

It is found in the cell membrane. It localises to the cell projection. Its subcellular location is the ruffle membrane. The protein localises to the cleavage furrow. The polypeptide is PH and SEC7 domain-containing protein 2 (PSD2) (Homo sapiens (Human)).